A 303-amino-acid chain; its full sequence is N-acetyl-D-glucosamine kinase (303 aa).

Residues 4-11 (GFDIGGTK) and 133-140 (GVGGGLVL) contribute to the ATP site. His-157, Cys-177, Cys-179, and Cys-184 together coordinate Zn(2+).

The protein belongs to the ROK (NagC/XylR) family. NagK subfamily.

The catalysed reaction is N-acetyl-D-glucosamine + ATP = N-acetyl-D-glucosamine 6-phosphate + ADP + H(+). The protein operates within cell wall biogenesis; peptidoglycan recycling. Catalyzes the phosphorylation of N-acetyl-D-glucosamine (GlcNAc) derived from cell-wall degradation, yielding GlcNAc-6-P. The polypeptide is N-acetyl-D-glucosamine kinase (Salmonella arizonae (strain ATCC BAA-731 / CDC346-86 / RSK2980)).